We begin with the raw amino-acid sequence, 366 residues long: Histidinol-phosphate aminotransferase 2 (366 aa).

Residues 1–21 (MQVKDQLSLLQPYKPGKSPEQ) form a disordered region. The residue at position 222 (lysine 222) is an N6-(pyridoxal phosphate)lysine.

The protein belongs to the class-II pyridoxal-phosphate-dependent aminotransferase family. Histidinol-phosphate aminotransferase subfamily. As to quaternary structure, homodimer. Requires pyridoxal 5'-phosphate as cofactor.

It catalyses the reaction L-histidinol phosphate + 2-oxoglutarate = 3-(imidazol-4-yl)-2-oxopropyl phosphate + L-glutamate. The protein operates within amino-acid biosynthesis; L-histidine biosynthesis; L-histidine from 5-phospho-alpha-D-ribose 1-diphosphate: step 7/9. The protein is Histidinol-phosphate aminotransferase 2 of Bacillus cereus (strain ZK / E33L).